A 356-amino-acid chain; its full sequence is MGLFGGRKHGGLFTFNKDDGYLEAILRGFKKGILSRADYNNLCQCDNLEDMKMHFISTDYGDFLAGEPSPIHTTTIAEKATGKLVSEFNHIRNQAVEPLSTFMDFISYGYMIDNVVLLITGTLHERDISELVDKCHPLGLFKSMATLSVVHNVADLYNNVLIDTPLAPYIQGCLSEEDLDEMNIEIIRNTLYKAYLEDFYNYCKYLGGQTELIMSDILKFEADRRSINITINSFGATELSKDDREKLYPSLGLLYPEGTSKLGKAEDVDQVRGILEVYSTYRNFFSDGVNNEKSLEDSFFEHEVHLNRMAFEDQYGYGVFYAYIKLREQEIRNIVWIAECISQNMKQKMNQYIPIF.

This sequence belongs to the V-ATPase V0D/AC39 subunit family. V-ATPase is a heteromultimeric enzyme composed of a peripheral catalytic V1 complex (components A to H) attached to an integral membrane V0 proton pore complex (components: a, c, c', c'' and d).

In terms of biological role, subunit of the integral membrane V0 complex of vacuolar ATPase. Vacuolar ATPase is responsible for acidifying a variety of intracellular compartments in eukaryotic cells, thus providing most of the energy required for transport processes in the vacuolar system. This is V-type proton ATPase subunit d (vatD-1) from Dictyostelium discoideum (Social amoeba).